Consider the following 275-residue polypeptide: MKLYANNKCLDLSVPQIMGILNFTPDSFSDSGQFFSLDKALFQVEKMLEEGATIIDIGGESTRPNADEVSEQEELHRVVPVVEAVRNRFDCWISVDSSKAVVMREAANVGMDLINDIRALQEPNALETAVKLALPVCIMHMQGQPRTMQANPYYENVVQDVLAFLQKRTNECLSAGIKKENLIWDMGFGFGKSVQHNYQLLQNLNEFCQIGYPVLAGLSRKSMIGAVLDKPVDQRIIGSAAGALIAVQKGAKILRVHDVAATSDMLKVWQATANA.

Residues 15 to 267 (PQIMGILNFT…DVAATSDMLK (253 aa)) enclose the Pterin-binding domain. Asn22 is a binding site for Mg(2+). Residues Thr62, Asp96, Asn115, Asp185, Lys221, and 255-257 (RVH) contribute to the (7,8-dihydropterin-6-yl)methyl diphosphate site.

It belongs to the DHPS family. In terms of assembly, homodimer. The cofactor is Mg(2+).

The enzyme catalyses (7,8-dihydropterin-6-yl)methyl diphosphate + 4-aminobenzoate = 7,8-dihydropteroate + diphosphate. It participates in cofactor biosynthesis; tetrahydrofolate biosynthesis; 7,8-dihydrofolate from 2-amino-4-hydroxy-6-hydroxymethyl-7,8-dihydropteridine diphosphate and 4-aminobenzoate: step 1/2. Its function is as follows. Catalyzes the condensation of para-aminobenzoate (pABA) with 6-hydroxymethyl-7,8-dihydropterin diphosphate (DHPt-PP) to form 7,8-dihydropteroate (H2Pte), the immediate precursor of folate derivatives. This Haemophilus influenzae (strain ATCC 51907 / DSM 11121 / KW20 / Rd) protein is Dihydropteroate synthase (folP-A).